The chain runs to 431 residues: Glycerol-3-phosphate dehydrogenase [NAD(P)+] (431 aa).

The segment covering 1-19 has biased composition (polar residues); the sequence is MTSANDKSTDTNVDSTQAE. The interval 1–25 is disordered; that stretch reads MTSANDKSTDTNVDSTQAEQKMAEK. NADPH contacts are provided by Ser-79, Phe-80, Arg-100, and Lys-173. Lys-173 and Gly-201 together coordinate sn-glycerol 3-phosphate. NADPH is bound at residue Ala-205. Residues Lys-256, Asp-309, Ser-319, Arg-320, and Asn-321 each coordinate sn-glycerol 3-phosphate. Lys-256 functions as the Proton acceptor in the catalytic mechanism. Arg-320 provides a ligand contact to NADPH. Glu-346 is a binding site for NADPH.

It belongs to the NAD-dependent glycerol-3-phosphate dehydrogenase family.

Its subcellular location is the cytoplasm. It catalyses the reaction sn-glycerol 3-phosphate + NAD(+) = dihydroxyacetone phosphate + NADH + H(+). The enzyme catalyses sn-glycerol 3-phosphate + NADP(+) = dihydroxyacetone phosphate + NADPH + H(+). The protein operates within membrane lipid metabolism; glycerophospholipid metabolism. Functionally, catalyzes the reduction of the glycolytic intermediate dihydroxyacetone phosphate (DHAP) to sn-glycerol 3-phosphate (G3P), the key precursor for phospholipid synthesis. This is Glycerol-3-phosphate dehydrogenase [NAD(P)+] from Psychrobacter arcticus (strain DSM 17307 / VKM B-2377 / 273-4).